A 215-amino-acid polypeptide reads, in one-letter code: MSKIYDWFEERLEIQSIADDISSKYVPPHVNIFYCFGGITFTCFLVQVATGFAMTFYYRPTVAEAFTSVQYLMTQVNFGWLIRSIHRWSASMMVLMMILHIFRVYLTGGFKKPRELTWVTGVLMAVCTVSFGVTGYSLPWDQIGYWAVKIVTGVPDAIPVIGQVLLELLRGGVAVGQSTLTRFYSLHTFVLPLFTAVFMLMHFLMIRKQGISGPL.

Residues 32–52 (IFYCFGGITFTCFLVQVATGF) form a helical membrane-spanning segment. A heme c-binding site is contributed by C35. The heme b site is built by H86 and H100. The next 3 helical transmembrane spans lie at 90–110 (ASMM…TGGF), 116–136 (LTWV…VTGY), and 186–206 (LHTF…FLMI). 2 residues coordinate heme b: H187 and H202.

Belongs to the cytochrome b family. PetB subfamily. As to quaternary structure, the 4 large subunits of the cytochrome b6-f complex are cytochrome b6, subunit IV (17 kDa polypeptide, PetD), cytochrome f and the Rieske protein, while the 4 small subunits are PetG, PetL, PetM and PetN. The complex functions as a dimer. It depends on heme b as a cofactor. The cofactor is heme c.

The protein resides in the plastid. The protein localises to the chloroplast thylakoid membrane. Its function is as follows. Component of the cytochrome b6-f complex, which mediates electron transfer between photosystem II (PSII) and photosystem I (PSI), cyclic electron flow around PSI, and state transitions. The sequence is that of Cytochrome b6 from Auxenochlorella protothecoides (Green microalga).